A 179-amino-acid polypeptide reads, in one-letter code: Large ribosomal subunit protein uL5 (179 aa).

This sequence belongs to the universal ribosomal protein uL5 family. As to quaternary structure, part of the 50S ribosomal subunit; part of the 5S rRNA/L5/L18/L25 subcomplex. Contacts the 5S rRNA and the P site tRNA. Forms a bridge to the 30S subunit in the 70S ribosome.

Functionally, this is one of the proteins that bind and probably mediate the attachment of the 5S RNA into the large ribosomal subunit, where it forms part of the central protuberance. In the 70S ribosome it contacts protein S13 of the 30S subunit (bridge B1b), connecting the 2 subunits; this bridge is implicated in subunit movement. Contacts the P site tRNA; the 5S rRNA and some of its associated proteins might help stabilize positioning of ribosome-bound tRNAs. This chain is Large ribosomal subunit protein uL5, found in Alkaliphilus metalliredigens (strain QYMF).